The primary structure comprises 684 residues: Protein SEEDLING PLASTID DEVELOPMENT 1 (684 aa).

The N-terminal 78 residues, Met1–Ser78, are a transit peptide targeting the chloroplast. Residues Ser33 to Ala91 form a disordered region. A compositionally biased stretch (low complexity) spans Ala50–Pro88. Residue Gly220–Thr227 coordinates ATP. Residues Pro651 to Asp684 are disordered. The span at Lys657–Ser667 shows a compositional bias: low complexity.

It belongs to the ycf45 family.

It localises to the plastid. Its subcellular location is the chloroplast membrane. The protein localises to the chloroplast envelope. Its function is as follows. Required during eoplast (a highly reduced plastid type present during the degreening and dehydration stages of seed maturation) development in embryos and early stages of eoplast redifferentiation during seedling growth. In Arabidopsis thaliana (Mouse-ear cress), this protein is Protein SEEDLING PLASTID DEVELOPMENT 1.